The chain runs to 275 residues: Homeobox-leucine zipper protein ATHB-17 (275 aa).

The tract at residues 95-143 (SSPLSDEGSGGGRDQLRLDMNRLPSSEDGDDEEFSHDDGSAPPRKKLRL) is disordered. Positions 136-195 (PPRKKLRLTREQSRLLEDSFRQNHTLNPKQKEVLAKHLMLRPRQIEVWFQNRRARSKLKQ) form a DNA-binding region, homeobox. The segment at 203 to 224 (LKRWFGSLTEENHRLHREVEEL) is leucine-zipper. The interval 252 to 275 (AASPSRAVVPVPAKKTFPPQERDR) is disordered.

It belongs to the HD-ZIP homeobox family. Class II subfamily.

The protein resides in the nucleus. Probable transcription factor. The polypeptide is Homeobox-leucine zipper protein ATHB-17 (ATHB-17) (Arabidopsis thaliana (Mouse-ear cress)).